A 215-amino-acid chain; its full sequence is Phosphatidylserine decarboxylase proenzyme (215 aa).

Ser-186 serves as the catalytic Schiff-base intermediate with substrate; via pyruvic acid. Ser-186 is modified (pyruvic acid (Ser); by autocatalysis).

The protein belongs to the phosphatidylserine decarboxylase family. PSD-A subfamily. Heterodimer of a large membrane-associated beta subunit and a small pyruvoyl-containing alpha subunit. Pyruvate serves as cofactor. In terms of processing, is synthesized initially as an inactive proenzyme. Formation of the active enzyme involves a self-maturation process in which the active site pyruvoyl group is generated from an internal serine residue via an autocatalytic post-translational modification. Two non-identical subunits are generated from the proenzyme in this reaction, and the pyruvate is formed at the N-terminus of the alpha chain, which is derived from the carboxyl end of the proenzyme. The post-translation cleavage follows an unusual pathway, termed non-hydrolytic serinolysis, in which the side chain hydroxyl group of the serine supplies its oxygen atom to form the C-terminus of the beta chain, while the remainder of the serine residue undergoes an oxidative deamination to produce ammonia and the pyruvoyl prosthetic group on the alpha chain.

It is found in the cell membrane. It catalyses the reaction a 1,2-diacyl-sn-glycero-3-phospho-L-serine + H(+) = a 1,2-diacyl-sn-glycero-3-phosphoethanolamine + CO2. The protein operates within phospholipid metabolism; phosphatidylethanolamine biosynthesis; phosphatidylethanolamine from CDP-diacylglycerol: step 2/2. In terms of biological role, catalyzes the formation of phosphatidylethanolamine (PtdEtn) from phosphatidylserine (PtdSer). This is Phosphatidylserine decarboxylase proenzyme from Pelagibacter ubique (strain HTCC1062).